The sequence spans 488 residues: Cysteine--tRNA ligase (488 aa).

Position 28 (Cys-28) interacts with Zn(2+). Residues 30 to 40 (PTVYDDAHLGH) carry the 'HIGH' region motif. The Zn(2+) site is built by Cys-209, His-239, and Glu-243. The 'KMSKS' region signature appears at 271–275 (KMSKS). Lys-274 is an ATP binding site.

The protein belongs to the class-I aminoacyl-tRNA synthetase family. Monomer. It depends on Zn(2+) as a cofactor.

Its subcellular location is the cytoplasm. It carries out the reaction tRNA(Cys) + L-cysteine + ATP = L-cysteinyl-tRNA(Cys) + AMP + diphosphate. The chain is Cysteine--tRNA ligase from Helicobacter hepaticus (strain ATCC 51449 / 3B1).